The following is a 1663-amino-acid chain: Cortactin-binding protein 2 (1663 aa).

5 disordered regions span residues methionine 1–alanine 26, lysine 203–alanine 225, glutamine 359–glycine 440, glycine 454–serine 478, and serine 497–proline 615. Residues arginine 119 to lysine 276 adopt a coiled-coil conformation. 2 stretches are compositionally biased toward polar residues: residues glycine 385–asparagine 396 and glutamine 418–alanine 435. The residue at position 498 (arginine 498) is an Asymmetric dimethylarginine. Pro residues predominate over residues proline 606–proline 615. ANK repeat units follow at residues glycine 709–tyrosine 739, aspartate 743–alanine 772, asparagine 776–histidine 805, glycine 809–valine 838, aspartate 842–glycine 871, and glutamate 912–arginine 942. The segment at lysine 1449 to serine 1490 is disordered. A Phosphoserine modification is found at serine 1524. The disordered stretch occupies residues valine 1579–lysine 1663. Residues proline 1586–cysteine 1595 show a composition bias toward polar residues. Positions serine 1624–glutamine 1638 are enriched in low complexity. The segment covering serine 1645–lysine 1663 has biased composition (basic and acidic residues).

Interacts with CTTN/cortactin SH3 domain. Interacts with STRN, STRN4/zinedin and MOB4/phocein; this interactions mediate the association with the STRIPAK core complex and may regulate dendritic spine distribution of the STRIPAK complex in hippocampal neurons. Activation of glutamate receptors weakens the interaction with STRN and STRN4.

The protein resides in the cytoplasm. It is found in the cell cortex. Its subcellular location is the cell projection. It localises to the dendritic spine. Functionally, regulates the dendritic spine distribution of CTTN/cortactin in hippocampal neurons, and thus controls dendritic spinogenesis and dendritic spine maintenance. Associates with the striatin-interacting phosphatase and kinase (STRIPAK) core complex to regulate dendritic spine distribution of the STRIPAK complex in hippocampal neurons. This chain is Cortactin-binding protein 2 (CTTNBP2), found in Rhinolophus ferrumequinum (Greater horseshoe bat).